The following is a 181-amino-acid chain: Probable cobalt-precorrin-6B C(15)-methyltransferase (decarboxylating) (181 aa).

Residues Thr-16, 40-44, Asp-61, and Ala-89 contribute to the S-adenosyl-L-methionine site; that span reads GCGSG.

It belongs to the methyltransferase superfamily. Archaeal-type CbiT family.

The catalysed reaction is Co-precorrin-6B + S-adenosyl-L-methionine = Co-precorrin-7 + S-adenosyl-L-homocysteine + CO2. Its pathway is cofactor biosynthesis; adenosylcobalamin biosynthesis; cob(II)yrinate a,c-diamide from sirohydrochlorin (anaerobic route): step 8/10. Its function is as follows. Catalyzes the methylation of C-15 in cobalt-precorrin-6B followed by the decarboxylation of C-12 to form cobalt-precorrin-7. The polypeptide is Probable cobalt-precorrin-6B C(15)-methyltransferase (decarboxylating) (Methanococcus maripaludis (strain DSM 14266 / JCM 13030 / NBRC 101832 / S2 / LL)).